A 201-amino-acid chain; its full sequence is Ephrin-A4 (201 aa).

An N-terminal signal peptide occupies residues 1–25 (MRLLPLLRTVLWAAFLGSPLRGGSS). The 130-residue stretch at 26–155 (LRHVVYWNSS…RLQVSVCCKE (130 aa)) folds into the Ephrin RBD domain. The N-linked (GlcNAc...) asparagine glycan is linked to Asn33. 2 disulfide bridges follow: Cys58-Cys99 and Cys86-Cys144. Ser170 carries the GPI-anchor amidated serine lipid modification. A propeptide spans 171-201 (GTSGWRGGDTPSPLCLLLLLLLLILRLLRIL) (removed in mature form).

It belongs to the ephrin family. Expressed in the adult spleen, lymph node, prostate, ovary, small intestine, and colon, and in fetal heart, lung, liver and kidney. Also detected in hematopoietic cell lines.

The protein resides in the cell membrane. It localises to the secreted. Functionally, cell surface GPI-bound ligand for Eph receptors, a family of receptor tyrosine kinases which are crucial for migration, repulsion and adhesion during neuronal, vascular and epithelial development. Binds promiscuously Eph receptors residing on adjacent cells, leading to contact-dependent bidirectional signaling into neighboring cells. May play a role in the interaction between activated B-lymphocytes and dendritic cells in tonsils. In Homo sapiens (Human), this protein is Ephrin-A4 (EFNA4).